The primary structure comprises 960 residues: Collagenase ColA (960 aa).

Positions 1–30 (MNKNLRFTQMMIGISTMALSFGSIQTQVSA) are cleaved as a signal peptide. A propeptide spanning residues 31 to 92 (EETAPYNILQ…KRDEIQLKQS (62 aa)) is cleaved from the precursor. Residues 93–365 (YTLAELNKMP…AVEQMKTNYG (273 aa)) form an activator domain region. The S1 metalloprotease domain stretch occupies residues 93–764 (YTLAELNKMP…VFHGVATEEK (672 aa)). The segment at 375–644 (DLQKIREEGK…MQQLIDNQDK (270 aa)) is catalytic subdomain. Zn(2+) is bound at residue His500. Glu501 is a catalytic residue. Zn(2+) contacts are provided by His504 and Glu532. Residues 652–764 (NDYLIQHAPK…VFHGVATEEK (113 aa)) are helper subdomain. In terms of domain architecture, PKD spans 768–849 (TTIVNMNGPY…ESKEQTKVTV (82 aa)). Residues 836–845 (SRGKESKEQT) are compositionally biased toward basic and acidic residues. Positions 836–859 (SRGKESKEQTKVTVKQDPQTSESY) are disordered. The segment covering 846–857 (KVTVKQDPQTSE) has biased composition (polar residues). The tract at residues 852–960 (DPQTSESYEE…KNGEYSLLVK (109 aa)) is collagen-binding domain.

This sequence belongs to the peptidase M9B family. Collagenase subfamily. Ca(2+) serves as cofactor. It depends on Zn(2+) as a cofactor.

It localises to the secreted. The enzyme catalyses Digestion of native collagen in the triple helical region at Xaa-|-Gly bonds. With synthetic peptides, a preference is shown for Gly at P3 and P1', Pro and Ala at P2 and P2', and hydroxyproline, Ala or Arg at P3'.. In terms of biological role, acts as a true collagenase, which is highly active and efficiently targets native tropocollagen. In vitro, can also cleave gelatin and the synthetic peptide FALGPA (furylacryloyl-Leu-Gly-Pro-Ala). May contribute to bacterial virulence in endophthalmitis or opportunistic infections via collagen degradation in the host extracellular matrix (ECM). In Bacillus cereus (strain ATCC 14579 / DSM 31 / CCUG 7414 / JCM 2152 / NBRC 15305 / NCIMB 9373 / NCTC 2599 / NRRL B-3711), this protein is Collagenase ColA.